Here is a 374-residue protein sequence, read N- to C-terminus: Guanine nucleotide-binding protein subunit alpha-15 (374 aa).

Residues 41-374 enclose the G-alpha domain; it reads GELKLLLLGP…ARYLDEINLL (334 aa). The segment at 44 to 57 is G1 motif; sequence KLLLLGPGESGKST. Residues 49–56, 183–189, 208–212, 277–280, and A346 each bind GTP; these read GPGESGKS, LRSRMPT, DAGGQ, and NKTD. Residues S56 and T189 each coordinate Mg(2+). Residues 181-189 are G2 motif; the sequence is DVLRSRMPT. Residues 204 to 213 are G3 motif; sequence LRIVDAGGQK. The interval 273–280 is G4 motif; the sequence is ILFLNKTD. Positions 344–349 are G5 motif; it reads TCATDT.

It belongs to the G-alpha family. G(q) subfamily. As to quaternary structure, g proteins are composed of 3 units; alpha, beta and gamma. The alpha chain contains the guanine nucleotide binding site.

Functionally, guanine nucleotide-binding proteins (G proteins) are involved as modulators or transducers in various transmembrane signaling systems. The sequence is that of Guanine nucleotide-binding protein subunit alpha-15 (Gna15) from Rattus norvegicus (Rat).